We begin with the raw amino-acid sequence, 481 residues long: Phenylalanine--tRNA ligase alpha subunit (481 aa).

Residues Thr-322, 361–363, and Tyr-401 contribute to the L-phenylalanine site; that span reads QLE. Residue Glu-403 participates in Mg(2+) binding. Position 426 (Phe-426) interacts with L-phenylalanine.

The protein belongs to the class-II aminoacyl-tRNA synthetase family. Phe-tRNA synthetase alpha subunit type 2 subfamily. As to quaternary structure, tetramer of two alpha and two beta subunits. It depends on Mg(2+) as a cofactor.

It localises to the cytoplasm. The enzyme catalyses tRNA(Phe) + L-phenylalanine + ATP = L-phenylalanyl-tRNA(Phe) + AMP + diphosphate + H(+). The sequence is that of Phenylalanine--tRNA ligase alpha subunit from Methanoculleus marisnigri (strain ATCC 35101 / DSM 1498 / JR1).